Reading from the N-terminus, the 808-residue chain is Phospholipase D alpha 1 (808 aa).

The C2 domain occupies 1-125 (MSKVLLHGTL…LDGDEVDKWI (125 aa)). D186 serves as a coordination point for Ca(2+). The PLD phosphodiesterase 1 domain maps to 326–364 (TMFTHHQKIVVVDHELPRGGSQKRRVMSFVGGIDLCDGR). Residues H331, K333, and D338 contribute to the active site. Residue H331 coordinates a 1,2-diacyl-sn-glycero-3-phosphate. 2 residues coordinate Ca(2+): H370 and H404. Positions 520 and 659 each coordinate a 1,2-diacyl-sn-glycero-3-phosphate. Positions 654-681 (FMIYVHSKMMIVDDEYIIVGSANINQRS) constitute a PLD phosphodiesterase 2 domain. Active-site residues include H659, K661, and D666. Residue E720 participates in Ca(2+) binding.

This sequence belongs to the phospholipase D family. C2-PLD subfamily. In terms of assembly, interacts (via C2 domain) with CARDA (via RGD or KGE motifs). It depends on Ca(2+) as a cofactor.

The enzyme catalyses a 1,2-diacyl-sn-glycero-3-phosphocholine + H2O = a 1,2-diacyl-sn-glycero-3-phosphate + choline + H(+). Functionally, hydrolyzes glycerol-phospholipids at the terminal phosphodiesteric bond. Plays an important role in various cellular processes. The chain is Phospholipase D alpha 1 from Cynara cardunculus (Cardoon).